Consider the following 264-residue polypeptide: Thymidylate synthase (264 aa).

Arg21 provides a ligand contact to dUMP. His51 contributes to the (6R)-5,10-methylene-5,6,7,8-tetrahydrofolate binding site. Arg126–Arg127 contacts dUMP. The active-site Nucleophile is the Cys146. DUMP is bound by residues Arg166–Asp169, Asn177, and His207–Tyr209. A (6R)-5,10-methylene-5,6,7,8-tetrahydrofolate-binding site is contributed by Asp169. Residue Ala263 participates in (6R)-5,10-methylene-5,6,7,8-tetrahydrofolate binding.

This sequence belongs to the thymidylate synthase family. Bacterial-type ThyA subfamily. As to quaternary structure, homodimer.

It localises to the cytoplasm. It carries out the reaction dUMP + (6R)-5,10-methylene-5,6,7,8-tetrahydrofolate = 7,8-dihydrofolate + dTMP. It functions in the pathway pyrimidine metabolism; dTTP biosynthesis. Catalyzes the reductive methylation of 2'-deoxyuridine-5'-monophosphate (dUMP) to 2'-deoxythymidine-5'-monophosphate (dTMP) while utilizing 5,10-methylenetetrahydrofolate (mTHF) as the methyl donor and reductant in the reaction, yielding dihydrofolate (DHF) as a by-product. This enzymatic reaction provides an intracellular de novo source of dTMP, an essential precursor for DNA biosynthesis. The protein is Thymidylate synthase of Agrobacterium fabrum (strain C58 / ATCC 33970) (Agrobacterium tumefaciens (strain C58)).